Consider the following 434-residue polypeptide: Prenyltransferase fogH (434 aa).

E86 provides a ligand contact to L-tryptophan. Residues R101, R248, K250, Y252, and Y346 each coordinate substrate.

The protein belongs to the tryptophan dimethylallyltransferase family.

The protein operates within secondary metabolite biosynthesis. Its function is as follows. Prenyltransferase; part of the gene cluster that mediates the biosynthesis of flavoglaucin and congeners (including aspergin, dihydroauroglaucin and auroglaucin), prenylated salicylaldehyde derivatives carrying a saturated or an unsaturated C-7 side chain. The PKS fogA releases the carboxylic acid (8E,10E,12E)-3,5,7-trihydroxytetradeca-8,10,12-trienoic acid as its product, as well as derivatives with one and two double bonds. FogA is indeed able to reduce the initial triketide, thus being at least partially responsible for the differently saturated heptyl side chains of flavoglaucin congeners. The oxidoreductases fogB, fogC and fogD modify the nascent polyketide in fogA-bound form and, together, fogA, fogB, fogC and fogD are necessary for the formation of the aromatic core and the cyclized PKS products are released as salicyl alcohols. In particular, fogB is responsible for oxidation of a hydroxyl group or reduction of remaining double bond(s) at the C-7 residue whereas fogD is probably involved in the reductive release of the modified PKS products. The cytochrome P450 monooxygenase fogE is then responsible for the hydroxylation at C-3 of the benzene ring. The fogE products are substrates of the prenyltransferase fogH and the prenylated benzyl alcohols are subsequently oxidized by the fogF to produce the final aryl aldehydes flavoglaucin and congeners. The short-chain dehydrogenase fogG does not seem to be involved in the biosynthesis of the prenylated salicylaldehyde derivatives. This Aspergillus ruber (strain CBS 135680) protein is Prenyltransferase fogH.